The primary structure comprises 102 residues: Iron-sulfur cluster assembly protein CyaY (102 aa).

It belongs to the frataxin family.

Involved in iron-sulfur (Fe-S) cluster assembly. May act as a regulator of Fe-S biogenesis. This chain is Iron-sulfur cluster assembly protein CyaY, found in Histophilus somni (strain 129Pt) (Haemophilus somnus).